A 738-amino-acid polypeptide reads, in one-letter code: Putative cyclic nucleotide-gated ion channel 7 (738 aa).

Residues 1-104 (MYKSQYISGQ…DKTLLVWNRL (104 aa)) are Cytoplasmic-facing. A helical transmembrane segment spans residues 105-125 (FVISCILAVSVDPLFFYLPIV). The Extracellular segment spans residues 126 to 139 (DNSGSSCIGIDTKL). The chain crosses the membrane as a helical span at residues 140–160 (AVTTTTLRTIVDVFYLTRMAL). Residues 161–193 (QFRTAYIAPSSRVFGRGELVIDPAKIAERYLTR) are Cytoplasmic-facing. Residues 194–214 (YFVVDFLAVLPLPQIAVWKFL) form a helical membrane-spanning segment. At 215–227 (HGSKGSDVLPTKT) the chain is on the extracellular side. A helical transmembrane segment spans residues 228–248 (ALLNIVIVQYIPRFVRFIPLT). Topologically, residues 249 to 268 (SELKKTAGAFAEGAWAGAAY) are cytoplasmic. Residues 269 to 289 (YLLWYMLASHITGAFWYMLSV) form a helical membrane-spanning segment. The Extracellular portion of the chain corresponds to 290–395 (ERNDTCWRFA…GQGLQTSTFP (106 aa)). A helical transmembrane segment spans residues 396 to 416 (GEVLFSIAIAIAGLLLFALLI). Topologically, residues 417-738 (GNMQTYLQSL…KPPEPDFDAE (322 aa)) are cytoplasmic. Residues 502–632 (LFAN…TFRF) and Glu-573 contribute to the a nucleoside 3',5'-cyclic phosphate site. A calmodulin-binding region spans residues 618–633 (FRRLHSRQVQQTFRFY). The IQ domain maps to 638 to 667 (RTWASCFIQAAWRRYSRRKNAELRRIEEKE). Disordered regions lie at residues 671–693 (GYED…SESS) and 715–738 (LRSS…FDAE).

This sequence belongs to the cyclic nucleotide-gated cation channel (TC 1.A.1.5) family. In terms of assembly, homotetramer or heterotetramer.

The protein localises to the cell membrane. In terms of biological role, putative cyclic nucleotide-gated ion channel. The polypeptide is Putative cyclic nucleotide-gated ion channel 7 (CNGC7) (Arabidopsis thaliana (Mouse-ear cress)).